The primary structure comprises 1027 residues: Fibril-forming collagen alpha chain (1027 aa).

The tract at residues Tyr1 to Val12 is nonhelical region (N-terminal). The segment at Tyr1–Ala1027 is disordered. The tract at residues Gly13–Ser1023 is triple-helical region. The span at Pro17–Ser26 shows a compositional bias: pro residues. Residues Pro21 and Pro24 each carry the 4-hydroxyproline; partial modification. A 4-hydroxyproline mark is found at Pro27 and Pro39. A 3-hydroxyproline; partial modification is found at Pro53. Pro54 carries the 4-hydroxyproline modification. The span at Ser63–Pro72 shows a compositional bias: basic and acidic residues. Pro72 carries the 4-hydroxyproline; partial modification. Gly residues predominate over residues Gly73–Gly91. Residues Pro90 and Pro93 each carry the 4-hydroxyproline modification. Residues Lys96 and Lys108 each carry the 5-hydroxylysine modification. O-linked (Gal...) hydroxylysine glycosylation is found at Lys96 and Lys108. 2 positions are modified to 4-hydroxyproline; partial: Pro123 and Pro128. The residue at position 150 (Pro150) is a 4-hydroxyproline. Residue Pro161 is modified to 3-hydroxyproline; partial. Position 162 is a 4-hydroxyproline (Pro162). At Pro164 the chain carries 3-hydroxyproline; partial. Residues Pro165, Pro174, Pro177, and Pro180 each carry the 4-hydroxyproline modification. Low complexity predominate over residues Ile168–Ser182. 2 positions are modified to 5-hydroxylysine: Lys183 and Lys192. Lys192 carries an O-linked (Gal...) hydroxylysine glycan. 4-hydroxyproline is present on residues Pro207, Pro216, Pro219, Pro228, and Pro237. Residues Glu227–Pro249 are compositionally biased toward low complexity. Pro243 carries the 4-hydroxyproline; partial modification. A 4-hydroxyproline mark is found at Pro249 and Pro255. Residues Gly259–Gly268 show a composition bias toward gly residues. Position 261 is a 5-hydroxylysine (Lys261). A glycan (O-linked (Gal...) hydroxylysine) is linked at Lys261. 4-hydroxyproline; partial occurs at positions 273 and 276. Lys279 is modified (5-hydroxylysine). O-linked (Gal...) hydroxylysine glycosylation occurs at Lys279. 4-hydroxyproline; partial is present on residues Pro285, Pro291, and Pro303. 4-hydroxyproline is present on residues Pro306, Pro312, Pro321, Pro327, and Pro339. At Lys342 the chain carries 5-hydroxylysine. Position 348 is a 4-hydroxyproline; partial (Pro348). Lys351 carries the 5-hydroxylysine; partial modification. Pro366, Pro372, and Pro375 each carry 4-hydroxyproline. A compositionally biased stretch (basic and acidic residues) spans Arg380–Gln396. Pro381 bears the 4-hydroxyproline; partial mark. 4-hydroxyproline is present on Pro387. A compositionally biased stretch (low complexity) spans Glu398 to Arg420. Position 416 is a 3-hydroxyproline; partial (Pro416). 4-hydroxyproline occurs at positions 417, 423, 429, and 432. Positions Glu437–Glu446 are enriched in basic and acidic residues. Over residues Thr447–Gln480 the composition is skewed to low complexity. Pro453, Pro465, and Pro483 each carry 4-hydroxyproline. 3 positions are modified to 4-hydroxyproline; partial: Pro500, Pro503, and Pro506. The span at Gly502–Gly511 shows a compositional bias: gly residues. Residues Pro513 and Pro525 each carry the 4-hydroxyproline modification. Positions Glu527–Ala543 are enriched in low complexity. A 4-hydroxyproline; partial mark is found at Pro533 and Pro536. At Pro540 the chain carries 4-hydroxyproline. Position 546 is a 5-hydroxylysine (Lys546). 3-hydroxyproline; partial is present on Pro551. 4-hydroxyproline occurs at positions 552 and 561. 5-hydroxylysine is present on residues Lys567 and Lys573. Lys573 carries O-linked (Gal...) hydroxylysine glycosylation. A compositionally biased stretch (basic and acidic residues) spans Ser575–Glu599. Pro603 is subject to 4-hydroxyproline. Lys612 bears the 5-hydroxylysine mark. The O-linked (Gal...) hydroxylysine glycan is linked to Lys612. Pro621 is modified (4-hydroxyproline; partial). The residue at position 627 (Pro627) is a 4-hydroxyproline. Residues Pro635–Gln644 are compositionally biased toward low complexity. Pro645 bears the 4-hydroxyproline; partial mark. The residue at position 647 (Pro647) is a 3-hydroxyproline; partial. Pro648 is subject to 4-hydroxyproline. Lys657 carries the post-translational modification 5-hydroxylysine. An O-linked (Gal...) hydroxylysine glycan is attached at Lys657. Pro663, Pro708, Pro711, Pro714, Pro717, and Pro723 each carry 4-hydroxyproline. Residues Glu698–Ser710 show a composition bias toward low complexity. A compositionally biased stretch (pro residues) spans Pro714 to Ser726. Lys738 is modified (5-hydroxylysine). The O-linked (Gal...) hydroxylysine glycan is linked to Lys738. Pro744 and Pro759 each carry 4-hydroxyproline. Basic and acidic residues predominate over residues Gln750–Asp771. Lys765 is subject to 5-hydroxylysine. Lys765 is a glycosylation site (O-linked (Gal...) hydroxylysine). Residue Pro773 is modified to 3-hydroxyproline; partial. 3 positions are modified to 4-hydroxyproline: Pro774, Pro783, and Pro792. Gly residues predominate over residues Gly802–Gly814. Position 810 is a 5-hydroxylysine (Lys810). Lys810 is a glycosylation site (O-linked (Gal...) hydroxylysine). Position 815 is a 3-hydroxyproline; partial (Pro815). Residues Pro816, Pro843, Pro849, Pro855, Pro861, Pro867, Pro888, Pro894, Pro903, and Pro915 each carry the 4-hydroxyproline modification. The segment covering Ala828 to Ala848 has biased composition (low complexity). Over residues Gln884–Pro894 the composition is skewed to low complexity. The segment covering Pro911–Lys927 has biased composition (low complexity). Lys927 is subject to 5-hydroxylysine. Lys927 carries an O-linked (Gal...) hydroxylysine glycan. Lys933 bears the 5-hydroxylysine; partial mark. 5-hydroxylysine occurs at positions 936 and 939. The O-linked (Gal...) hydroxylysine glycan is linked to Lys936. A compositionally biased stretch (low complexity) spans Thr942 to Pro962. At Pro945 the chain carries 4-hydroxyproline. Pro954 carries the 4-hydroxyproline; partial modification. 4-hydroxyproline occurs at positions 963 and 966. The span at Gly973 to Gly982 shows a compositional bias: gly residues. Low complexity predominate over residues Pro983–Pro1001. 2 positions are modified to 4-hydroxyproline: Pro984 and Pro990. Pro1010 carries the 3-hydroxyproline; partial modification. Residues Pro1010–Pro1020 are compositionally biased toward pro residues. Pro1011 carries the 4-hydroxyproline modification. Position 1013 is a 3-hydroxyproline; partial (Pro1013). Pro1014 bears the 4-hydroxyproline mark. Pro1016 carries the post-translational modification 3-hydroxyproline; partial. Pro1017 carries the post-translational modification 4-hydroxyproline. Pro1019 is modified (3-hydroxyproline; partial). A 4-hydroxyproline modification is found at Pro1020. Positions Asp1024–Ala1027 are nonhelical region (C-terminal).

In terms of assembly, homotetramer.

The protein resides in the secreted. Its subcellular location is the extracellular space. It localises to the extracellular matrix. Fibril-forming collagen. The chain is Fibril-forming collagen alpha chain from Riftia pachyptila (Vent tube worm).